A 166-amino-acid chain; its full sequence is uncharacterized protein (166 aa).

This is an uncharacterized protein from Enterobacteria phage T4 (Bacteriophage T4).